Reading from the N-terminus, the 377-residue chain is UPF0754 membrane protein GK0639 (377 aa).

The next 2 helical transmembrane spans lie at 7–27 (LLFMVAVGALIGGVTNFIAIV) and 357–377 (YLGALLGGLIGAVQGVIGLWL).

It belongs to the UPF0754 family.

Its subcellular location is the cell membrane. The protein is UPF0754 membrane protein GK0639 of Geobacillus kaustophilus (strain HTA426).